The following is a 1977-amino-acid chain: Protein rotatin homolog (1977 aa).

The interval 141-166 (SVSSLSSNDIPSQATESADSSSNQIY) is disordered.

Belongs to the rotatin family. In terms of assembly, interacts with Rcd4;this complex is recruited to daughter centrioles before their conversion to centrosomes.

It localises to the cytoplasm. The protein resides in the cytoskeleton. Its subcellular location is the microtubule organizing center. The protein localises to the centrosome. It is found in the centriole. Its function is as follows. Participes in the structural integrity of both centrioles and basal bodies and in centriole cohesion. Participates in the later stages of centriole assembly through the interaction with Rcd4 leading to the centriole to centrosome conversion. The chain is Protein rotatin homolog from Drosophila melanogaster (Fruit fly).